The sequence spans 282 residues: MQILDGKKLSQKIKESIKKEVEELKKEQDIIPGLAVILVGDDPASHTYVKMKARACKDVGIYSIVHEMPESISQKEIEETISMMNKNPNIDGILVQLPLPKHIDTTKILELIDPAKDVDGFHPYNFGRLMQGLDTFAPCTPLGVMELLDEYGIDVKGMNACVVGASNIVGKPMAALLLNRFATVDICHIYTKDLAEHTKKADIIAVGVGKPNLITADMVKERAIVIDIGINKVGNKIVGDVDFENVSKKASYITPVPGGVGPMTIAMLLKNTIKAAKQRKRS.

NADP(+) contacts are provided by residues 164-166 (GAS), isoleucine 189, and isoleucine 230.

The protein belongs to the tetrahydrofolate dehydrogenase/cyclohydrolase family. Homodimer.

The enzyme catalyses (6R)-5,10-methylene-5,6,7,8-tetrahydrofolate + NADP(+) = (6R)-5,10-methenyltetrahydrofolate + NADPH. The catalysed reaction is (6R)-5,10-methenyltetrahydrofolate + H2O = (6R)-10-formyltetrahydrofolate + H(+). The protein operates within one-carbon metabolism; tetrahydrofolate interconversion. Catalyzes the oxidation of 5,10-methylenetetrahydrofolate to 5,10-methenyltetrahydrofolate and then the hydrolysis of 5,10-methenyltetrahydrofolate to 10-formyltetrahydrofolate. The polypeptide is Bifunctional protein FolD (Nitratiruptor sp. (strain SB155-2)).